Here is a 2343-residue protein sequence, read N- to C-terminus: Coagulation factor VIII (2343 aa).

A signal peptide spans 1-19 (MQVELYTCCFLCLLPFSLS). 2 Plastocyanin-like domains span residues 20-199 (ATRK…LLVC) and 207-343 (ERTQ…VDSC). Positions 20–343 (ATRKYYLGAV…MEAYVKVDSC (324 aa)) constitute an F5/8 type A 1 domain. Asn233 and Asn253 each carry an N-linked (GlcNAc...) asparagine glycan. Residues Tyr359 and Tyr408 each carry the sulfotyrosine modification. Plastocyanin-like domains are found at residues 393-567 (KTWV…LLIC) and 577-724 (NQMM…VSSC). An F5/8 type A 2 domain is found at 393 to 724 (KTWVHYIAAE…MTALLKVSSC (332 aa)). Residue Asn595 is glycosylated (N-linked (GlcNAc...) asparagine). 3 positions are modified to sulfotyrosine: Tyr731, Tyr732, and Tyr736. Residues 752-761 (PRSFSQNSRH) are compositionally biased toward polar residues. Disordered stretches follow at residues 752-774 (PRSFSQNSRHPSTKEKQLKATTT) and 828-865 (ADDHSRGAIERNKGPPEVASLRPELRHSEDREFTPEPE). The tract at residues 754-1659 (SFSQNSRHPS…NPPVSKHHQR (906 aa)) is b. Basic and acidic residues-rich tracts occupy residues 828–841 (ADDHSRGAIERNKG) and 850–861 (PELRHSEDREFT). Residues Asn877, Asn921, Asn937, Asn938, Asn956, Asn1007, Asn1019, Asn1037, Asn1062, Asn1069, and Asn1080 are each glycosylated (N-linked (GlcNAc...) asparagine). The interval 1124-1147 (GKNSLSSEQRPSPKQLTSLGSEKS) is disordered. Over residues 1125–1147 (KNSLSSEQRPSPKQLTSLGSEKS) the composition is skewed to polar residues. Residues Asn1179, Asn1193, Asn1275, Asn1290, Asn1308, Asn1341, Asn1391, Asn1419, Asn1429, Asn1453, Asn1547, and Asn1618 are each glycosylated (N-linked (GlcNAc...) asparagine). The span at 1302 to 1314 (TTRMSSNASQHVI) shows a compositional bias: polar residues. The segment at 1302-1326 (TTRMSSNASQHVITQRGKRSLKQPR) is disordered. The interval 1592–1632 (KSQKKSQTNTAFKRKDTILPLGPCENNDSTAAINEGQDKPQ) is disordered. A sulfotyrosine mark is found at Tyr1675 and Tyr1691. 2 Plastocyanin-like domains span residues 1705–1869 (KTRH…LLIC) and 1879–2032 (GRQV…SKKC). The F5/8 type A 3 domain occupies 1705 to 2032 (KTRHYFIAAV…TLFLVYSKKC (328 aa)). N-linked (GlcNAc...) asparagine glycosylation occurs at Asn1821. F5/8 type C domains follow at residues 2032-2180 (CQTP…LLGC) and 2185-2337 (CSMP…VLGC). Cystine bridges form between Cys2032/Cys2180 and Cys2185/Cys2337. N-linked (GlcNAc...) asparagine glycans are attached at residues Asn2129 and Asn2281.

The protein belongs to the multicopper oxidase family. As to quaternary structure, interacts with vWF. vWF binding is essential for the stabilization of F8 in circulation. In terms of processing, proteolytically cleaved by cathepsin CTSG to produce a partially activated form.

The protein resides in the secreted. Its subcellular location is the extracellular space. Its function is as follows. Factor VIII, along with calcium and phospholipid, acts as a cofactor for factor IXa when it converts factor X to the activated form, factor Xa. The protein is Coagulation factor VIII (F8) of Canis lupus familiaris (Dog).